We begin with the raw amino-acid sequence, 147 residues long: Cyclic di-AMP receptor B (147 aa).

Positions 18–78 (MIEADKVAHV…SIFGLERIEF (61 aa)) constitute a CBS domain. K23, A25, T46, A47, and R131 together coordinate 3',3'-c-di-AMP.

As to quaternary structure, homodimer. Forms a homodimer with a parallel, head-to-head assembly of the monomers. Under conditions of potassium starvation and corresponding low c-di-AMP levels, apo-DarB specifically interacts with the N-terminal region of the RelA. Under the same conditions, apo-DarB also specifically interacts with the C-terminal part of the pyruvate carboxylase.

Its activity is regulated as follows. Binds c-di-AMP. Binding of c-di-AMP to DarB inhibits the interaction with RelA and PYC. Its function is as follows. Involved in the c-di-AMP-dependent regulation of the bacterial stringent response. Modulates the activities of at least two enzymes under conditions of potassium limitation. Apo-DarB regulates the activity of the GTP pyrophosphokinase RelA by interacting directly with RelA, leading to stimulation of (p)ppGpp synthesis and induction of the stringent response. Apo-DarB also regulates pyruvate carboxylase (PYC) at two levels: directly at the protein level by binding to the enzyme and stimulating the synthesis of oxaloacetate and indirectly, by interaction with RelA, which leads to activation of the stringent response and to the increased expression of the pycA gene. Stimulation of these enzymes by DarB is prevented in the presence of cyclic di-AMP (c-di-AMP). This chain is Cyclic di-AMP receptor B, found in Bacillus subtilis (strain 168).